The following is a 152-amino-acid chain: MSTKVTVELQRLPHAEGLPLPAYQTAEAAGLDLMAAVPEDAPLTLASGRYALVPTGLAIALPPGHEAQVRPRSGLAAKHGVTVLNSPGTIDADYRGEIKVILINHGAAAFVIKRGERIAQMVIAPVVQAALVPVATLSATDRGAGGFGSTGR.

Substrate is bound by residues 72 to 74, N85, 89 to 91, and K99; these read RSG and TID.

It belongs to the dUTPase family. It depends on Mg(2+) as a cofactor.

The enzyme catalyses dUTP + H2O = dUMP + diphosphate + H(+). It participates in pyrimidine metabolism; dUMP biosynthesis; dUMP from dCTP (dUTP route): step 2/2. Its function is as follows. This enzyme is involved in nucleotide metabolism: it produces dUMP, the immediate precursor of thymidine nucleotides and it decreases the intracellular concentration of dUTP so that uracil cannot be incorporated into DNA. In Bradyrhizobium diazoefficiens (strain JCM 10833 / BCRC 13528 / IAM 13628 / NBRC 14792 / USDA 110), this protein is Deoxyuridine 5'-triphosphate nucleotidohydrolase.